The chain runs to 308 residues: Homeobox protein abdominal-A homolog (308 aa).

The homeobox DNA-binding region spans 138–197 (RRRGRQTYTRFQTLELEKEFHFNHYLTRRRRIEIAHALCLTERQIKIWFQNRRMKLKKEL). The span at 207–221 (ARREREEQDKMKNES) shows a compositional bias: basic and acidic residues. The interval 207–277 (ARREREEQDK…SGNLGSHLHH (71 aa)) is disordered. Residues 223–247 (KSAQQHHSQKQAQQEHTVVGSQQTS) are compositionally biased toward low complexity. Residues 248-269 (NGGGTGGGTGGSGGAGSGGSSG) are compositionally biased toward gly residues.

It belongs to the Antp homeobox family.

Its subcellular location is the nucleus. Its function is as follows. Sequence-specific transcription factor which is part of a developmental regulatory system that provides cells with specific positional identities on the anterior-posterior axis. The polypeptide is Homeobox protein abdominal-A homolog (Anopheles gambiae (African malaria mosquito)).